The sequence spans 403 residues: Para-nitrophenol 4-monooxygenase (403 aa).

Residues 6 to 35 and 279 to 289 each bind FAD; these read GVVVVGGGPVGLLTALKLGKAGIKVVVLEA and FRRGRVVLAGD.

The protein belongs to the PheA/TfdB FAD monooxygenase family. As to quaternary structure, monomer. It depends on FAD as a cofactor.

The catalysed reaction is 4-nitrophenol + NADPH + O2 + H(+) = 1,4-benzoquinone + nitrite + NADP(+) + H2O. Its pathway is xenobiotic degradation; 4-nitrophenol degradation. Functionally, involved in the degradation of para-nitrophenol (4-NP). Catalyzes oxidation of 4-nitrophenol (4-NP) at position 4 with concomitant removal of the nitro group as nitrite and production of para-benzoquinone. The protein is Para-nitrophenol 4-monooxygenase (pnpA) of Pseudomonas sp. (strain WBC-3).